The primary structure comprises 297 residues: Bifunctional protein FolD 1 (297 aa).

Residues 164–166 (GRS), serine 193, and isoleucine 234 each bind NADP(+).

Belongs to the tetrahydrofolate dehydrogenase/cyclohydrolase family. Homodimer.

It catalyses the reaction (6R)-5,10-methylene-5,6,7,8-tetrahydrofolate + NADP(+) = (6R)-5,10-methenyltetrahydrofolate + NADPH. The catalysed reaction is (6R)-5,10-methenyltetrahydrofolate + H2O = (6R)-10-formyltetrahydrofolate + H(+). It functions in the pathway one-carbon metabolism; tetrahydrofolate interconversion. In terms of biological role, catalyzes the oxidation of 5,10-methylenetetrahydrofolate to 5,10-methenyltetrahydrofolate and then the hydrolysis of 5,10-methenyltetrahydrofolate to 10-formyltetrahydrofolate. The chain is Bifunctional protein FolD 1 from Haloarcula marismortui (strain ATCC 43049 / DSM 3752 / JCM 8966 / VKM B-1809) (Halobacterium marismortui).